The chain runs to 180 residues: NADH-quinone oxidoreductase subunit I (180 aa).

2 4Fe-4S ferredoxin-type domains span residues 50-80 (LTRD…LQKA) and 90-119 (EFFR…LTPD). Residues Cys60, Cys63, Cys66, Cys70, Cys99, Cys102, Cys105, and Cys109 each contribute to the [4Fe-4S] cluster site.

This sequence belongs to the complex I 23 kDa subunit family. As to quaternary structure, NDH-1 is composed of 13 different subunits. Subunits NuoA, H, J, K, L, M, N constitute the membrane sector of the complex. Requires [4Fe-4S] cluster as cofactor.

The protein resides in the cell inner membrane. It carries out the reaction a quinone + NADH + 5 H(+)(in) = a quinol + NAD(+) + 4 H(+)(out). Its function is as follows. NDH-1 shuttles electrons from NADH, via FMN and iron-sulfur (Fe-S) centers, to quinones in the respiratory chain. The immediate electron acceptor for the enzyme in this species is believed to be ubiquinone. Couples the redox reaction to proton translocation (for every two electrons transferred, four hydrogen ions are translocated across the cytoplasmic membrane), and thus conserves the redox energy in a proton gradient. This chain is NADH-quinone oxidoreductase subunit I, found in Shigella boydii serotype 4 (strain Sb227).